The chain runs to 337 residues: GTPase Obg (337 aa).

The region spanning 1–158 (MFVDRVIIEL…HHIELELKLI (158 aa)) is the Obg domain. An OBG-type G domain is found at 159–330 (ADVGLVGFPN…LIEKMTQRLS (172 aa)). GTP is bound by residues 165 to 172 (GFPNAGKS), 190 to 194 (FTTLQ), 212 to 215 (DIPG), 282 to 285 (NKID), and 311 to 313 (SAV). Mg(2+)-binding residues include Ser-172 and Thr-192.

This sequence belongs to the TRAFAC class OBG-HflX-like GTPase superfamily. OBG GTPase family. As to quaternary structure, monomer. Requires Mg(2+) as cofactor.

It is found in the cytoplasm. Its function is as follows. An essential GTPase which binds GTP, GDP and possibly (p)ppGpp with moderate affinity, with high nucleotide exchange rates and a fairly low GTP hydrolysis rate. Plays a role in control of the cell cycle, stress response, ribosome biogenesis and in those bacteria that undergo differentiation, in morphogenesis control. The polypeptide is GTPase Obg (Protochlamydia amoebophila (strain UWE25)).